The chain runs to 62 residues: Photosystem II reaction center protein Z (62 aa).

Helical transmembrane passes span 8–28 (AVFA…VVFA) and 41–61 (FSGT…NSLI).

This sequence belongs to the PsbZ family. In terms of assembly, PSII is composed of 1 copy each of membrane proteins PsbA, PsbB, PsbC, PsbD, PsbE, PsbF, PsbH, PsbI, PsbJ, PsbK, PsbL, PsbM, PsbT, PsbY, PsbZ, Psb30/Ycf12, at least 3 peripheral proteins of the oxygen-evolving complex and a large number of cofactors. It forms dimeric complexes.

It is found in the plastid. The protein localises to the chloroplast thylakoid membrane. Functionally, may control the interaction of photosystem II (PSII) cores with the light-harvesting antenna, regulates electron flow through the 2 photosystem reaction centers. PSII is a light-driven water plastoquinone oxidoreductase, using light energy to abstract electrons from H(2)O, generating a proton gradient subsequently used for ATP formation. The protein is Photosystem II reaction center protein Z of Vitis vinifera (Grape).